The primary structure comprises 878 residues: MTKFTTEEVRSKFITYFKANNHTHVPASSLIPHNDPSLMFVNSGMVQFKNVFTGQGKRPYNKAVTSQKSLRAGGKHNDLENVGYTARHHTFFEMLGNFSFGDYFKEQAIYYAWNLLTKEFELPKDKLYATIYHTDDEAAAYWKKIAGFGDDRIIKIKTNDNFWSMGDTGPCGPCSEIFYDHGEQIYGGLPGTKDEDGDRFIEIWNMVFMQYEQIDKDTSIELSQKSIDTGMGLERMTAVLQHVNNNYDIDLFQEIINFTENIVKVKVEGEAKFSYRVIADHLRASSFLIADGVIPSNEGRGYVLRRIMRRSMRHAHMLGSKEPLMYKLLPKLVDLMGNVYPELKRAESFISSILEQEEIRFKATLERGLKLLTEETETLTKGNELSGEVAFKLYDTYGFPLDLTEDILKNRDIAVDHKGFEEQMLMQKARARKSWLGSGESKTDQLWFDIKEQHGSTEFLGYTLNEAKCKIIALIKNNNLVNDIKEIDTQFLLISNQTPFYGESGGQIGDIGTIFAKDSEVEVIDTLKYLGSIIIHKCILKKGQINVGENANFSIDIRYRQNLRIHHSATHILHAVLHEVLGKHVTQKGSLVAPTYLRFDISHSKAVTNEEITLIEDKVNEIIRDNHEVTTTLMATEDAIKQGAMALFGEKYDSEVRVVKMGETSLELCGGTHVRRTGDIGCFKITSESAIAAGVRRIEAVCGEFVITLMREKDSLLKSIESSFKTNKNELITKVNNILERNKEVEKELEKTLLASLDLSIEQIEKQSAQITGIKLLYKKVGNIDNKILRQAAENLTKKVEDLIMVYIAEGIGKLSITVAVSKAITDKYNADIIAKKLSLFLGGSGGGGQASLAQAGGNDIGKLTNIHEKLYSLLTVS.

Zn(2+) is bound by residues histidine 567, histidine 571, cysteine 669, and histidine 673.

It belongs to the class-II aminoacyl-tRNA synthetase family. It depends on Zn(2+) as a cofactor.

It localises to the cytoplasm. It carries out the reaction tRNA(Ala) + L-alanine + ATP = L-alanyl-tRNA(Ala) + AMP + diphosphate. Catalyzes the attachment of alanine to tRNA(Ala) in a two-step reaction: alanine is first activated by ATP to form Ala-AMP and then transferred to the acceptor end of tRNA(Ala). Also edits incorrectly charged Ser-tRNA(Ala) and Gly-tRNA(Ala) via its editing domain. This Rickettsia conorii (strain ATCC VR-613 / Malish 7) protein is Alanine--tRNA ligase.